Reading from the N-terminus, the 394-residue chain is Elongation factor Tu (394 aa).

In terms of domain architecture, tr-type G spans 10-204 (KPHLNVGTIG…ALDTYIPLPE (195 aa)). Positions 19 to 26 (GHVDHGKT) are G1. A GTP-binding site is contributed by 19-26 (GHVDHGKT). Thr-26 contacts Mg(2+). Residues 60-64 (GITIN) form a G2 region. Positions 81–84 (DCPG) are G3. GTP contacts are provided by residues 81–85 (DCPGH) and 136–139 (NKCD). The interval 136–139 (NKCD) is G4. The G5 stretch occupies residues 174–176 (SAL).

It belongs to the TRAFAC class translation factor GTPase superfamily. Classic translation factor GTPase family. EF-Tu/EF-1A subfamily. In terms of assembly, monomer.

Its subcellular location is the cytoplasm. It carries out the reaction GTP + H2O = GDP + phosphate + H(+). Functionally, GTP hydrolase that promotes the GTP-dependent binding of aminoacyl-tRNA to the A-site of ribosomes during protein biosynthesis. In Psychromonas ingrahamii (strain DSM 17664 / CCUG 51855 / 37), this protein is Elongation factor Tu.